A 227-amino-acid chain; its full sequence is MAPYHIRKYQDSDHRSVVDLFRRGMEEHIPATFRHMLLLPRTLLLLLGVPLTLFLASGSWLLVLLSILTLFLSLWFLAKYTWEKHVMNCLHTDMADITRTYMSSHSSCFWVAESRGQTVGMVAARPVKDPLLQKKQLQLLHLSVSLQHRREGLGKAMVRTVLQFAQMQGFSEVVLSTSMLQYAALALYQGMGFQKTGETFYTYLSRLRKSPMINLKYSLTSPWEGDL.

2 consecutive transmembrane segments (helical) span residues 36-56 (MLLL…LFLA) and 58-78 (GSWL…WFLA). The N-acetyltransferase domain occupies 61-220 (LLVLLSILTL…PMINLKYSLT (160 aa)).

It belongs to the camello family.

The protein resides in the membrane. It catalyses the reaction L-lysyl-[protein] + acetyl-CoA = N(6)-acetyl-L-lysyl-[protein] + CoA + H(+). Has histone acetyltransferase activity in vitro, with specificity for histone H4. The chain is N-acetyltransferase family 8 member 7 from Mus musculus (Mouse).